A 417-amino-acid polypeptide reads, in one-letter code: Gamma-glutamyl phosphate reductase (417 aa).

The protein belongs to the gamma-glutamyl phosphate reductase family.

It localises to the cytoplasm. It carries out the reaction L-glutamate 5-semialdehyde + phosphate + NADP(+) = L-glutamyl 5-phosphate + NADPH + H(+). Its pathway is amino-acid biosynthesis; L-proline biosynthesis; L-glutamate 5-semialdehyde from L-glutamate: step 2/2. In terms of biological role, catalyzes the NADPH-dependent reduction of L-glutamate 5-phosphate into L-glutamate 5-semialdehyde and phosphate. The product spontaneously undergoes cyclization to form 1-pyrroline-5-carboxylate. In Desulfitobacterium hafniense (strain DSM 10664 / DCB-2), this protein is Gamma-glutamyl phosphate reductase.